The sequence spans 467 residues: Chromosomal replication initiator protein DnaA (467 aa).

A domain I, interacts with DnaA modulators region spans residues 1-87; it reads MSSSLWLQCL…VGSRPVVAPK (87 aa). Residues 87-130 form a domain II region; that stretch reads KPAPVRTAADVAAESSAPAQLAQRKPIHKTWDDDSAAADITHRS. Residues 131-347 form a domain III, AAA+ region region; that stretch reads NVNPKHKFNN…GALNRVIANA (217 aa). Residues Gly175, Gly177, Lys178, and Thr179 each contribute to the ATP site. Positions 348-467 are domain IV, binds dsDNA; sequence NFTGRPITID…YSNLIRTLSS (120 aa).

This sequence belongs to the DnaA family. In terms of assembly, oligomerizes as a right-handed, spiral filament on DNA at oriC.

The protein resides in the cytoplasm. Plays an essential role in the initiation and regulation of chromosomal replication. ATP-DnaA binds to the origin of replication (oriC) to initiate formation of the DNA replication initiation complex once per cell cycle. Binds the DnaA box (a 9 base pair repeat at the origin) and separates the double-stranded (ds)DNA. Forms a right-handed helical filament on oriC DNA; dsDNA binds to the exterior of the filament while single-stranded (ss)DNA is stabiized in the filament's interior. The ATP-DnaA-oriC complex binds and stabilizes one strand of the AT-rich DNA unwinding element (DUE), permitting loading of DNA polymerase. After initiation quickly degrades to an ADP-DnaA complex that is not apt for DNA replication. Binds acidic phospholipids. The chain is Chromosomal replication initiator protein DnaA from Vibrio cholerae serotype O1 (strain ATCC 39315 / El Tor Inaba N16961).